A 196-amino-acid polypeptide reads, in one-letter code: Bcl-2-like protein 11 (196 aa).

The interval 1 to 68 is disordered; it reads MAKQPSDVNS…PLAPPASPGP (68 aa). The span at 34–43 shows a compositional bias: polar residues; it reads TSLQTESQGN. At Ser65 the chain carries Phosphoserine; by MAPK. Phosphoserine occurs at positions 73, 83, and 90. The disordered stretch occupies residues 90-114; that stretch reads SGYFSFDTDRSPAPMSCDKSTQTPS. The BH3 motif lies at 146–160; the sequence is IAQELRRIGDEFNET.

Belongs to the Bcl-2 family. In terms of assembly, forms heterodimers with a number of antiapoptotic Bcl-2 proteins, including MCL1, BCL2, BCL2L1 isoform Bcl-X(L), BCL2A1/BFL-1, and BCL2L2/BCLW. Does not heterodimerize with proapoptotic proteins such as BAD, BOK or BAK. Identified in a complex containing BCL2L11, DYNLL1 and BCL2L1 isoform Bcl-X(L); BH3 integrity is required for BCL2L1-binding. Interacts with YWHAZ. When phosphorylated, interacts with TRIM2; this interaction is associated with ubiquitination and degradation. Interacts (via BH3) with MCL1; this interaction may sequester BCL2L11 and prevent its pro-apoptotic activity. When phosphorylated, isoform BimEL interacts with USP27X; this interaction leads to BCL2L11 deubiquitination and stabilization. Interacts with GIMAP5. Interacts with BCL2L10/BCL-B. In terms of processing, phosphorylation at Ser-65 by MAPK1/MAPK3 leads interaction with TRIM2 and ubiquitination, followed by proteasomal degradation. Deubiquitination catalyzed by USP27X stabilizes the protein. Ubiquitination by TRIM2 following phosphorylation by MAPK1/MAPK3 leads to proteasomal degradation. Conversely, deubiquitination catalyzed by USP27X stabilizes the protein. In terms of tissue distribution, widely expressed.

It localises to the membrane. It is found in the mitochondrion. Functionally, induces apoptosis and anoikis. This Rattus norvegicus (Rat) protein is Bcl-2-like protein 11 (Bcl2l11).